Consider the following 302-residue polypeptide: N-acetyl-D-glucosamine kinase (302 aa).

Residues 4–11 (GFDVGGTK) and 133–140 (GFGGGLVY) contribute to the ATP site. Residues histidine 157, cysteine 177, cysteine 179, and cysteine 184 each contribute to the Zn(2+) site.

It belongs to the ROK (NagC/XylR) family. NagK subfamily.

The catalysed reaction is N-acetyl-D-glucosamine + ATP = N-acetyl-D-glucosamine 6-phosphate + ADP + H(+). The protein operates within cell wall biogenesis; peptidoglycan recycling. In terms of biological role, catalyzes the phosphorylation of N-acetyl-D-glucosamine (GlcNAc) derived from cell-wall degradation, yielding GlcNAc-6-P. The sequence is that of N-acetyl-D-glucosamine kinase from Vibrio cholerae serotype O1 (strain ATCC 39315 / El Tor Inaba N16961).